Reading from the N-terminus, the 383-residue chain is Heterogeneous nuclear rnp K-like protein 2 (383 aa).

KH domains follow at residues 58-122, 161-226, and 256-321; these read NITF…LGQV, IGNL…INEI, and QVSQ…QTML. Positions 332-383 are disordered; that stretch reads REEHEASLKDGSSVPAAAAASAATSISASGANQNDSIHTPVSDNESPVVFTE. Residues 343 to 362 are compositionally biased toward low complexity; sequence SSVPAAAAASAATSISASGA. The segment covering 363 to 376 has biased composition (polar residues); the sequence is NQNDSIHTPVSDNE.

The protein belongs to the HEK2 family. Binds RNA.

The protein localises to the cytoplasm. The protein resides in the P-body. Its subcellular location is the nucleus. It is found in the chromosome. It localises to the telomere. RNA-binding protein involved in the correct localization of transcripts in the cell. RNA localization is a widespread mechanism for achieving localized protein synthesis. Involved in structural and functional organization of telomeric chromatin and regulates silencing at the HMR locus. The chain is Heterogeneous nuclear rnp K-like protein 2 (HEK2) from Kluyveromyces lactis (strain ATCC 8585 / CBS 2359 / DSM 70799 / NBRC 1267 / NRRL Y-1140 / WM37) (Yeast).